The primary structure comprises 826 residues: Ubiquitin carboxyl-terminal hydrolase 16 (826 aa).

Residues 1-23 (MGKKRTKGKSVPEKASSESTEPM) are disordered. The segment at 22 to 141 (PMCRHLRKGL…QVVDYVRKQA (120 aa)) adopts a UBP-type zinc-finger fold. C24, H26, C48, C51, C73, C76, C81, H89, H93, H102, C115, and C118 together coordinate Zn(2+). K139 is covalently cross-linked (Glycyl lysine isopeptide (Lys-Gly) (interchain with G-Cter in SUMO2)). The segment at 145 to 184 (TSKPAEKNNGHIELENKKLEKESKNEQEREKSESMAKENI) is disordered. Positions 148–180 (PAEKNNGHIELENKKLEKESKNEQEREKSESMA) are enriched in basic and acidic residues. Phosphoserine is present on S188. One can recognise a USP domain in the interval 195 to 825 (KGLSNLGNTC…QAYLLFYERI (631 aa)). C204 serves as the catalytic Nucleophile. The span at 392 to 407 (QSGKKNINDKNVKKTM) shows a compositional bias: basic and acidic residues. Disordered regions lie at residues 392-456 (QSGK…RRQQ) and 526-553 (ADER…TSAP). Residues 408 to 419 (EEEDKDSEEEKD) show a composition bias toward acidic residues. S414 carries the post-translational modification Phosphoserine. A compositionally biased stretch (basic residues) spans 436–456 (HTQKKAKKQAKKQAKNQRRQQ). Over residues 526–537 (ADERKCPEHPEV) the composition is skewed to basic and acidic residues. Residues 539–551 (SVSTESDLGSLTS) are compositionally biased toward polar residues. The active-site Proton acceptor is H760.

This sequence belongs to the peptidase C19 family. USP16 subfamily. In terms of assembly, homotetramer. Associates with late pre-40S ribosomes. Interacts with CEP78; promoting deubiquitination of tektins. In terms of processing, phosphorylated at the onset of mitosis and dephosphorylated during the metaphase/anaphase transition. Phosphorylation by AURKB enhances the deubiquitinase activity.

The protein localises to the nucleus. It carries out the reaction Thiol-dependent hydrolysis of ester, thioester, amide, peptide and isopeptide bonds formed by the C-terminal Gly of ubiquitin (a 76-residue protein attached to proteins as an intracellular targeting signal).. In terms of biological role, specifically deubiquitinates 'Lys-120' of histone H2A (H2AK119Ub), a specific tag for epigenetic transcriptional repression, thereby acting as a coactivator. Deubiquitination of histone H2A is a prerequisite for subsequent phosphorylation at 'Ser-11' of histone H3 (H3S10ph), and is required for chromosome segregation when cells enter into mitosis. In resting B- and T-lymphocytes, phosphorylation by AURKB leads to enhance its activity, thereby maintaining transcription in resting lymphocytes. Regulates Hox gene expression via histone H2A deubiquitination. Prefers nucleosomal substrates. Does not deubiquitinate histone H2B. Also deubiquitinates non-histone proteins, such as ribosomal protein RPS27A: deubiquitination of monoubiquitinated RPS27A promotes maturation of the 40S ribosomal subunit. Also mediates deubiquitination of tektin proteins (TEKT1, TEKT2, TEK3, TEKT4 and TEKT5), promoting their stability. This Rattus norvegicus (Rat) protein is Ubiquitin carboxyl-terminal hydrolase 16 (Usp16).